Here is a 427-residue protein sequence, read N- to C-terminus: Isocitrate lyase (427 aa).

Substrate is bound at residue Ser89–Trp91. Asp150 is a Mg(2+) binding site. The active-site Proton acceptor is the Cys188. Residues Gly189–His190, Arg225, Asn310–Ser314, and Thr344 each bind substrate.

It belongs to the isocitrate lyase/PEP mutase superfamily. Isocitrate lyase family. In terms of assembly, homotetramer. The cofactor is Mg(2+).

The enzyme catalyses D-threo-isocitrate = glyoxylate + succinate. Its pathway is carbohydrate metabolism; glyoxylate cycle; (S)-malate from isocitrate: step 1/2. Functionally, involved in the metabolic adaptation in response to environmental changes. Catalyzes the reversible formation of succinate and glyoxylate from isocitrate, a key step of the glyoxylate cycle, which operates as an anaplerotic route for replenishing the tricarboxylic acid cycle during growth on fatty acid substrates. This Halalkalibacterium halodurans (strain ATCC BAA-125 / DSM 18197 / FERM 7344 / JCM 9153 / C-125) (Bacillus halodurans) protein is Isocitrate lyase (aceA).